The chain runs to 197 residues: Phosphoheptose isomerase (197 aa).

One can recognise an SIS domain in the interval 40 to 197 (CIASIAQGGK…LVEHSIFGKQ (158 aa)). 55–57 (NGG) lines the substrate pocket. Residues His-64 and Glu-68 each contribute to the Zn(2+) site. Substrate-binding positions include Glu-68, 97 to 98 (ND), 123 to 125 (STS), Ser-128, and Gln-175. Residues Gln-175 and His-183 each contribute to the Zn(2+) site.

Belongs to the SIS family. GmhA subfamily. As to quaternary structure, homotetramer. The cofactor is Zn(2+).

It localises to the cytoplasm. The catalysed reaction is 2 D-sedoheptulose 7-phosphate = D-glycero-alpha-D-manno-heptose 7-phosphate + D-glycero-beta-D-manno-heptose 7-phosphate. Its pathway is carbohydrate biosynthesis; D-glycero-D-manno-heptose 7-phosphate biosynthesis; D-glycero-alpha-D-manno-heptose 7-phosphate and D-glycero-beta-D-manno-heptose 7-phosphate from sedoheptulose 7-phosphate: step 1/1. It functions in the pathway capsule biogenesis; capsule polysaccharide biosynthesis. Its function is as follows. Catalyzes the isomerization of sedoheptulose 7-phosphate in D-glycero-D-manno-heptose 7-phosphate. This Burkholderia mallei (strain ATCC 23344) protein is Phosphoheptose isomerase.